The sequence spans 95 residues: uncharacterized protein (95 aa).

This is an uncharacterized protein from Homo sapiens (Human).